The primary structure comprises 114 residues: MFAFKKAQRLLKKNDFDFVFESAKKITTEDFIFLFRENKLGYARLGLALSKKMIAKAHDRNRIKRLLRESFRHTNLPAVDIIILARPGLAKKTNLGINTKLNKTWEKLTSCYGK.

Belongs to the RnpA family. As to quaternary structure, consists of a catalytic RNA component (M1 or rnpB) and a protein subunit.

The enzyme catalyses Endonucleolytic cleavage of RNA, removing 5'-extranucleotides from tRNA precursor.. RNaseP catalyzes the removal of the 5'-leader sequence from pre-tRNA to produce the mature 5'-terminus. It can also cleave other RNA substrates such as 4.5S RNA. The protein component plays an auxiliary but essential role in vivo by binding to the 5'-leader sequence and broadening the substrate specificity of the ribozyme. The sequence is that of Ribonuclease P protein component from Legionella pneumophila (strain Lens).